A 288-amino-acid chain; its full sequence is Heme oxygenase 1 (288 aa).

Residues 1–265 (MERPQPDSMP…KPPLNTRSQA (265 aa)) are Cytoplasmic-facing. The heme b site is built by lysine 18, histidine 25, tyrosine 134, and arginine 183. Positions 223–260 (HDTKDQSPSRAPGLRQRASNKVQDSAPVETPRGKPPLN) are disordered. Phosphoserine is present on serine 229. A helical; Anchor for type IV membrane protein membrane pass occupies residues 266–288 (PLLRWVLTLSFLVATVAVGLYAM).

Belongs to the heme oxygenase family. As to quaternary structure, (Microbial infection) Interacts with SARS-CoV-2 ORF3A protein; the interaction promotes ORF3A-induced autophagy but is unlikely to be involved in ORF3A-mediated induction of reticulophagy. Homodimer and higher order homooligomer. Oligomerization is crucial for its stability and function in the endoplasmic reticulum. Interacts with FLVCR2; this interaction is potentiated in the presence of heme. Post-translationally, a soluble form arises by proteolytic removal of the membrane anchor. As to expression, expressed at higher levels in renal cancer tissue than in normal tissue (at protein level).

Its subcellular location is the endoplasmic reticulum membrane. The enzyme catalyses heme b + 3 reduced [NADPH--hemoprotein reductase] + 3 O2 = biliverdin IXalpha + CO + Fe(2+) + 3 oxidized [NADPH--hemoprotein reductase] + 3 H2O + H(+). Its function is as follows. Catalyzes the oxidative cleavage of heme at the alpha-methene bridge carbon, released as carbon monoxide (CO), to generate biliverdin IXalpha, while releasing the central heme iron chelate as ferrous iron. Affords protection against programmed cell death and this cytoprotective effect relies on its ability to catabolize free heme and prevent it from sensitizing cells to undergo apoptosis. In terms of biological role, (Microbial infection) During SARS-COV-2 infection, promotes SARS-CoV-2 ORF3A-mediated autophagy but is unlikely to be required for ORF3A-mediated induction of reticulophagy. Catalyzes the oxidative cleavage of heme at the alpha-methene bridge carbon, released as carbon monoxide (CO), to generate biliverdin IXalpha, while releasing the central heme iron chelate as ferrous iron. The polypeptide is Heme oxygenase 1 (HMOX1) (Homo sapiens (Human)).